Consider the following 307-residue polypeptide: MLKGRNLLDPMDFSLEELEEVFKLADEIIEEPEKFLHVCDGKILATLFYEPSTRTRFSFEAAMLRLGGQVIGFSEPNSSSVAKGESVADTIRTVGCYADIAAMRHPKEGAPAIAAMYSDIPVINAGDGSHQHPTQTLTDLLTIRSLKGDLSNLTIGCCGDLKFGRTVHSLVKALSRYKNNKFVFMSPEELKIPDYIRKEILEKNNIEYKEVSKMEDAMAELDILYMTRVQRERFFNEDDYVRLKDSYILDGEKMKYAKKDMMVLHPLPRVNEIAYEIDQDPRGCYFKQAKYGMYVRMALIAKLLGVR.

Residues Arg-54 and Thr-55 each contribute to the carbamoyl phosphate site. Lys-83 provides a ligand contact to L-aspartate. Residues Arg-104, His-132, and Gln-135 each contribute to the carbamoyl phosphate site. L-aspartate contacts are provided by Arg-165 and Arg-228. Residues Leu-267 and Pro-268 each coordinate carbamoyl phosphate.

The protein belongs to the aspartate/ornithine carbamoyltransferase superfamily. ATCase family. As to quaternary structure, heterododecamer (2C3:3R2) of six catalytic PyrB chains organized as two trimers (C3), and six regulatory PyrI chains organized as three dimers (R2).

It carries out the reaction carbamoyl phosphate + L-aspartate = N-carbamoyl-L-aspartate + phosphate + H(+). It functions in the pathway pyrimidine metabolism; UMP biosynthesis via de novo pathway; (S)-dihydroorotate from bicarbonate: step 2/3. Functionally, catalyzes the condensation of carbamoyl phosphate and aspartate to form carbamoyl aspartate and inorganic phosphate, the committed step in the de novo pyrimidine nucleotide biosynthesis pathway. The protein is Aspartate carbamoyltransferase catalytic subunit of Clostridium botulinum (strain Langeland / NCTC 10281 / Type F).